The following is a 74-amino-acid chain: Ferredoxin MycCII (74 aa).

The 29-residue stretch at 1-29 (MRIVLDAERCVGAGQCEATAPELFTQGDD) folds into the 4Fe-4S ferredoxin-type domain. [3Fe-4S] cluster contacts are provided by cysteine 10, cysteine 16, and cysteine 54.

[3Fe-4S] cluster serves as cofactor.

It participates in antibiotic biosynthesis; mycinamicin biosynthesis. In terms of biological role, specific electron transport protein capable of effectively supporting cytochrome P450 MycCI activity in the biosynthesis of mycinamicin, a 16-membered macrolide antibiotic. This chain is Ferredoxin MycCII, found in Micromonospora griseorubida.